We begin with the raw amino-acid sequence, 78 residues long: Acyl carrier protein (78 aa).

Positions 2–77 constitute a Carrier domain; that stretch reads SDIAERVKKI…DAIKYIGENM (76 aa). Ser-37 carries the post-translational modification O-(pantetheine 4'-phosphoryl)serine.

The protein belongs to the acyl carrier protein (ACP) family. 4'-phosphopantetheine is transferred from CoA to a specific serine of apo-ACP by AcpS. This modification is essential for activity because fatty acids are bound in thioester linkage to the sulfhydryl of the prosthetic group.

The protein resides in the cytoplasm. It functions in the pathway lipid metabolism; fatty acid biosynthesis. Functionally, carrier of the growing fatty acid chain in fatty acid biosynthesis. The sequence is that of Acyl carrier protein from Magnetococcus marinus (strain ATCC BAA-1437 / JCM 17883 / MC-1).